Here is a 137-residue protein sequence, read N- to C-terminus: Basic phospholipase A2 beta-bungarotoxin A1 chain (137 aa).

The first 9 residues, 1–9 (AVCVSLLGA), serve as a signal peptide directing secretion. Residues 10–17 (ANIPPHPL) constitute a propeptide that is removed on maturation. 6 cysteine pairs are disulfide-bonded: Cys44-Cys136, Cys46-Cys62, Cys61-Cys117, Cys68-Cys110, Cys78-Cys103, and Cys96-Cys108. The Ca(2+) site is built by Tyr45, Gly47, and Gly49. Residue His65 is part of the active site. Asp66 serves as a coordination point for Ca(2+). Asp111 is an active-site residue.

Belongs to the phospholipase A2 family. Group I subfamily. D49 sub-subfamily. Heterodimer; disulfide-linked. The A chain has phospholipase A2 activity and the B chain shows homology with the basic protease inhibitors. It depends on Ca(2+) as a cofactor. As to expression, expressed by the venom gland.

The protein localises to the secreted. It catalyses the reaction a 1,2-diacyl-sn-glycero-3-phosphocholine + H2O = a 1-acyl-sn-glycero-3-phosphocholine + a fatty acid + H(+). Its function is as follows. Snake venom phospholipase A2 (PLA2) that shows presynaptic neurotoxicity. The A chain has phospholipase activity. PLA2 catalyzes the calcium-dependent hydrolysis of the 2-acyl groups in 3-sn-phosphoglycerides. This chain is Basic phospholipase A2 beta-bungarotoxin A1 chain, found in Bungarus candidus (Malayan krait).